The primary structure comprises 1291 residues: Period circadian protein homolog 1 (1291 aa).

A disordered region spans residues Met1–Thr134. Positions Met1–Pro151 are interaction with BTRC. Positions Asn48–Glu115 are enriched in low complexity. Residues Gln116–Ala132 are compositionally biased toward polar residues. Thr121 bears the Phosphothreonine; by CSNK1E mark. 2 positions are modified to phosphoserine; by CSNK1E: Ser122 and Ser126. The Nuclear export signal 1 signature appears at Leu138–Leu147. PAS domains lie at Ile208 to Leu275 and Tyr348 to Gln414. The region spanning His422–Pro465 is the PAC domain. The Nuclear export signal 2 motif lies at Leu489 to Leu498. Disordered stretches follow at residues Gly508–Val544 and Thr647–Val698. 2 stretches are compositionally biased toward low complexity: residues Gly513–Gly533 and Ala652–Ala662. Positions Glu596–Ser815 are required for phosphorylation by CSNK1E. Phosphoserine is present on residues Ser661, Ser663, and Ser704. Disordered stretches follow at residues Gly749 to Ala772, Thr809 to Thr873, and Ser938 to Gly1037. A compositionally biased stretch (pro residues) spans Ala751–Thr769. The residue at position 815 (Ser815) is a Phosphoserine. The Nuclear localization signal motif lies at Ile824–Arg840. Residues Gly827 to Thr846 show a composition bias toward basic residues. Pro residues-rich tracts occupy residues Ser859–Thr873 and Pro955–Pro965. The segment covering Phe973–Leu985 has biased composition (polar residues). Phosphoserine occurs at positions 978 and 979. A Nuclear export signal 3 motif is present at residues Leu981–Leu988. The short motif at Leu1042 to Leu1046 is the LXXLL element. Residues Arg1051–Ser1061 show a composition bias toward low complexity. 2 disordered regions span residues Arg1051–Ser1099 and Ser1207–Ser1291. Residues Leu1062 to Glu1076 are compositionally biased toward gly residues. Low complexity predominate over residues Gly1077 to Ser1094. Positions Ser1148–Ser1291 are CRY binding domain. The span at Gly1235–Asp1248 shows a compositional bias: gly residues. Polar residues predominate over residues Ala1253–Ser1267.

In terms of assembly, homodimer. Component of the circadian core oscillator, which includes the CRY proteins, CLOCK or NPAS2, BMAL1 or BMAL2, CSNK1D and/or CSNK1E, TIMELESS, and the PER proteins. Interacts directly with TIMELESS. Interacts directly with PER2, PER3, CRY1 and CRY2. Interacts with BMAL1 and CLOCK. Interacts with GPRASP1. Interacts (phosphorylated) with BTRC and FBXW11; the interactions trigger proteasomal degradation. Interacts with NONO and SFPQ. Interacts with WDR5. Interacts with U2AF1L4 (Isoform 3). Interacts with USP2. Interacts with HNF4A. Phosphorylated on serine residues by CSNK1D, CSNK1E and probably also by CSNK1G2. Phosphorylation by CSNK1D or CSNK1E promotes nuclear location of PER proteins as well as ubiquitination and subsequent degradation. May be dephosphorylated by PP1. In terms of processing, ubiquitinated; requires phosphorylation by CSNK1E and interaction with BTRC and FBXW11. Deubiquitinated by USP2. As to expression, in brain, highest expression is observed in the SCN. Highly expressed in the pyramidal cell layer of the piriform cortex, the periventricular part of the caudate-putamen, many thalamic nuclei, and the granular layer of the cerebellar cortex. Weaker expression is detected in most area of the brain, including cortical and non cortical structures. Expression but no oscillations occurs in the glomerular and mitral cell layers of the olfactory bulb, the internal granular layer of the cerebellum, the cornu ammonis and dentate gyrus of the hippocampus, the cerebral and piriform cortices. Expressed in the renal cortex (at protein level). Also found in heart, brain, bladder, lumbar spinal cord, spleen, lung, liver, skeletal muscle and testis.

It is found in the nucleus. The protein resides in the cytoplasm. Transcriptional repressor which forms a core component of the circadian clock. The circadian clock, an internal time-keeping system, regulates various physiological processes through the generation of approximately 24 hour circadian rhythms in gene expression, which are translated into rhythms in metabolism and behavior. It is derived from the Latin roots 'circa' (about) and 'diem' (day) and acts as an important regulator of a wide array of physiological functions including metabolism, sleep, body temperature, blood pressure, endocrine, immune, cardiovascular, and renal function. Consists of two major components: the central clock, residing in the suprachiasmatic nucleus (SCN) of the brain, and the peripheral clocks that are present in nearly every tissue and organ system. Both the central and peripheral clocks can be reset by environmental cues, also known as Zeitgebers (German for 'timegivers'). The predominant Zeitgeber for the central clock is light, which is sensed by retina and signals directly to the SCN. The central clock entrains the peripheral clocks through neuronal and hormonal signals, body temperature and feeding-related cues, aligning all clocks with the external light/dark cycle. Circadian rhythms allow an organism to achieve temporal homeostasis with its environment at the molecular level by regulating gene expression to create a peak of protein expression once every 24 hours to control when a particular physiological process is most active with respect to the solar day. Transcription and translation of core clock components (CLOCK, NPAS2, BMAL1, BMAL2, PER1, PER2, PER3, CRY1 and CRY2) plays a critical role in rhythm generation, whereas delays imposed by post-translational modifications (PTMs) are important for determining the period (tau) of the rhythms (tau refers to the period of a rhythm and is the length, in time, of one complete cycle). A diurnal rhythm is synchronized with the day/night cycle, while the ultradian and infradian rhythms have a period shorter and longer than 24 hours, respectively. Disruptions in the circadian rhythms contribute to the pathology of cardiovascular diseases, cancer, metabolic syndromes and aging. A transcription/translation feedback loop (TTFL) forms the core of the molecular circadian clock mechanism. Transcription factors, CLOCK or NPAS2 and BMAL1 or BMAL2, form the positive limb of the feedback loop, act in the form of a heterodimer and activate the transcription of core clock genes and clock-controlled genes (involved in key metabolic processes), harboring E-box elements (5'-CACGTG-3') within their promoters. The core clock genes: PER1/2/3 and CRY1/2 which are transcriptional repressors form the negative limb of the feedback loop and interact with the CLOCK|NPAS2-BMAL1|BMAL2 heterodimer inhibiting its activity and thereby negatively regulating their own expression. This heterodimer also activates nuclear receptors NR1D1/2 and RORA/B/G, which form a second feedback loop and which activate and repress BMAL1 transcription, respectively. Regulates circadian target genes expression at post-transcriptional levels, but may not be required for the repression at transcriptional level. Controls PER2 protein decay. Represses CRY2 preventing its repression on CLOCK/BMAL1 target genes such as FXYD5 and SCNN1A in kidney and PPARA in liver. Besides its involvement in the maintenance of the circadian clock, has an important function in the regulation of several processes. Participates in the repression of glucocorticoid receptor NR3C1/GR-induced transcriptional activity by reducing the association of NR3C1/GR to glucocorticoid response elements (GREs) by BMAL1:CLOCK. Plays a role in the modulation of the neuroinflammatory state via the regulation of inflammatory mediators release, such as CCL2 and IL6. In spinal astrocytes, negatively regulates the MAPK14/p38 and MAPK8/JNK MAPK cascades as well as the subsequent activation of NFkappaB. Coordinately regulates the expression of multiple genes that are involved in the regulation of renal sodium reabsorption. Can act as gene expression activator in a gene and tissue specific manner, in kidney enhances WNK1 and SLC12A3 expression in collaboration with CLOCK. Modulates hair follicle cycling. Represses the CLOCK-BMAL1 induced transcription of BHLHE40/DEC1. The protein is Period circadian protein homolog 1 (Per1) of Mus musculus (Mouse).